Consider the following 325-residue polypeptide: Undecaprenyl-phosphate 4-deoxy-4-formamido-L-arabinose transferase (325 aa).

A run of 2 helical transmembrane segments spans residues 236 to 256 (LSIF…LLIL) and 270 to 290 (VFTL…GMGL).

Belongs to the glycosyltransferase 2 family.

Its subcellular location is the cell inner membrane. The catalysed reaction is UDP-4-deoxy-4-formamido-beta-L-arabinose + di-trans,octa-cis-undecaprenyl phosphate = 4-deoxy-4-formamido-alpha-L-arabinopyranosyl di-trans,octa-cis-undecaprenyl phosphate + UDP. Its pathway is glycolipid biosynthesis; 4-amino-4-deoxy-alpha-L-arabinose undecaprenyl phosphate biosynthesis; 4-amino-4-deoxy-alpha-L-arabinose undecaprenyl phosphate from UDP-4-deoxy-4-formamido-beta-L-arabinose and undecaprenyl phosphate: step 1/2. It functions in the pathway bacterial outer membrane biogenesis; lipopolysaccharide biosynthesis. In terms of biological role, catalyzes the transfer of 4-deoxy-4-formamido-L-arabinose from UDP to undecaprenyl phosphate. The modified arabinose is attached to lipid A and is required for resistance to polymyxin and cationic antimicrobial peptides. This Edwardsiella ictaluri (strain 93-146) protein is Undecaprenyl-phosphate 4-deoxy-4-formamido-L-arabinose transferase.